The primary structure comprises 874 residues: Alanine--tRNA ligase (874 aa).

The Zn(2+) site is built by His563, His567, Cys665, and His669.

This sequence belongs to the class-II aminoacyl-tRNA synthetase family. It depends on Zn(2+) as a cofactor.

It localises to the cytoplasm. It catalyses the reaction tRNA(Ala) + L-alanine + ATP = L-alanyl-tRNA(Ala) + AMP + diphosphate. Its function is as follows. Catalyzes the attachment of alanine to tRNA(Ala) in a two-step reaction: alanine is first activated by ATP to form Ala-AMP and then transferred to the acceptor end of tRNA(Ala). Also edits incorrectly charged Ser-tRNA(Ala) and Gly-tRNA(Ala) via its editing domain. The polypeptide is Alanine--tRNA ligase (Haemophilus influenzae (strain 86-028NP)).